We begin with the raw amino-acid sequence, 43 residues long: Antimicrobial protein PcfHb (43 aa).

As to quaternary structure, possible monomer. Expressed in mucus-secreting tissues.

Its subcellular location is the secreted. Shows antimicrobial activity against M.luteus (MIC=4 uM) and E.coli (MIC=12 uM), as well as against the yeast C.tropicalis (MIC=4 uM). Shows a pro-inflammatory effect, since the topical application of the protein induces an increase of cellular recruitment characterized by an increase in the number of leukocyte rolling. Does not show hemolytic activity on human erythrocytes (at doses up to 100 uM). This chain is Antimicrobial protein PcfHb, found in Potamotrygon cf. henlei (Freshwater stingray).